Consider the following 1234-residue polypeptide: DNA-directed RNA polymerase subunit beta (1234 aa).

This sequence belongs to the RNA polymerase beta chain family. In terms of assembly, the RNAP catalytic core consists of 2 alpha, 1 beta, 1 beta' and 1 omega subunit. When a sigma factor is associated with the core the holoenzyme is formed, which can initiate transcription.

It carries out the reaction RNA(n) + a ribonucleoside 5'-triphosphate = RNA(n+1) + diphosphate. Functionally, DNA-dependent RNA polymerase catalyzes the transcription of DNA into RNA using the four ribonucleoside triphosphates as substrates. The polypeptide is DNA-directed RNA polymerase subunit beta (Clostridium perfringens (strain SM101 / Type A)).